The primary structure comprises 210 residues: Calcium-activated potassium channel subunit beta-4 (210 aa).

Residues 1–19 (MAKLRVSYEYTEAEDKSIR) lie on the Cytoplasmic side of the membrane. Residues 20–40 (LGLFLIVSGILSLFIFGFCWL) form a helical membrane-spanning segment. The Extracellular segment spans residues 41 to 167 (SPALQDLQAT…DVLLQRTHDE (127 aa)). N-linked (GlcNAc...) asparagine glycans are attached at residues N53 and N90. The chain crosses the membrane as a helical span at residues 168–188 (IVLLHCFLWPVVAFVVGVLIV). The Cytoplasmic portion of the chain corresponds to 189–210 (VLTICAKSLAVKAEAMKKRKFS).

Belongs to the KCNMB (TC 8.A.14.1) family. KCNMB4 subfamily. Interacts with KCNMA1 tetramer. There are probably 4 molecules of KCMNB4 per KCNMA1 tetramer. Interacts with FMR1 (via N-terminus). In terms of processing, phosphorylated. Phosphorylation modulates its effect on KCNMA1 activation kinetics. Post-translationally, N-glycosylated. A highly glycosylated form is promoted by KCNMA1. Glycosylation, which is not required for the interaction with KCNMA1 and subcellular location, increases protection against charybdotoxin.

It localises to the membrane. Functionally, regulatory subunit of the calcium activated potassium KCNMA1 (maxiK) channel. Modulates the calcium sensitivity and gating kinetics of KCNMA1, thereby contributing to KCNMA1 channel diversity. Decreases the gating kinetics and calcium sensitivity of the KCNMA1 channel, but with fast deactivation kinetics. May decrease KCNMA1 channel openings at low calcium concentrations but increases channel openings at high calcium concentrations. Makes KCNMA1 channel resistant to 100 nM charybdotoxin (CTX) toxin concentrations. The polypeptide is Calcium-activated potassium channel subunit beta-4 (Kcnmb4) (Rattus norvegicus (Rat)).